Consider the following 246-residue polypeptide: Putative F-box/LRR-repeat protein 9 (246 aa).

One can recognise an F-box domain in the interval 18-65 (YRNWAELPPELTSSILLRLGAIEILQNAQRVCKSWRRVCQDPSMWRKI).

The polypeptide is Putative F-box/LRR-repeat protein 9 (FBL9) (Arabidopsis thaliana (Mouse-ear cress)).